A 24-amino-acid chain; its full sequence is KASSSAPKGWTHHGSRFTFHRGSM.

The disordered stretch occupies residues lysine 1–methionine 24. Residues tryptophan 10–methionine 24 show a composition bias toward basic residues. A C-type lectin domain is found at histidine 13–methionine 24.

In terms of tissue distribution, expressed by the venom gland.

Its subcellular location is the secreted. Able to depolarize frog skeletal muscle fibers, but has no effects on squid giant axons. Tetrodotoxin is able to partially antagonize the depolarization. Induces myonecrosis. The sequence is that of Myotoxin TmC4-47.2 from Thalassophryne maculosa (Cano toadfish).